Consider the following 399-residue polypeptide: ATP phosphoribosyltransferase regulatory subunit (399 aa).

Belongs to the class-II aminoacyl-tRNA synthetase family. HisZ subfamily. In terms of assembly, heteromultimer composed of HisG and HisZ subunits.

It is found in the cytoplasm. It participates in amino-acid biosynthesis; L-histidine biosynthesis; L-histidine from 5-phospho-alpha-D-ribose 1-diphosphate: step 1/9. Required for the first step of histidine biosynthesis. May allow the feedback regulation of ATP phosphoribosyltransferase activity by histidine. This is ATP phosphoribosyltransferase regulatory subunit from Symbiobacterium thermophilum (strain DSM 24528 / JCM 14929 / IAM 14863 / T).